We begin with the raw amino-acid sequence, 145 residues long: D-aminoacyl-tRNA deacylase (145 aa).

Residues 137 to 138 (GP) carry the Gly-cisPro motif, important for rejection of L-amino acids motif.

Belongs to the DTD family. In terms of assembly, homodimer.

The protein localises to the cytoplasm. It catalyses the reaction glycyl-tRNA(Ala) + H2O = tRNA(Ala) + glycine + H(+). The catalysed reaction is a D-aminoacyl-tRNA + H2O = a tRNA + a D-alpha-amino acid + H(+). An aminoacyl-tRNA editing enzyme that deacylates mischarged D-aminoacyl-tRNAs. Also deacylates mischarged glycyl-tRNA(Ala), protecting cells against glycine mischarging by AlaRS. Acts via tRNA-based rather than protein-based catalysis; rejects L-amino acids rather than detecting D-amino acids in the active site. By recycling D-aminoacyl-tRNA to D-amino acids and free tRNA molecules, this enzyme counteracts the toxicity associated with the formation of D-aminoacyl-tRNA entities in vivo and helps enforce protein L-homochirality. In Shewanella putrefaciens (strain CN-32 / ATCC BAA-453), this protein is D-aminoacyl-tRNA deacylase.